The primary structure comprises 631 residues: VPS9 domain-containing protein 1 (631 aa).

S116 is modified (phosphoserine). Residues 187-221 (RQMMENLVIAKAREETLQRKMEERRLRLQEAANRR) adopt a coiled-coil conformation. The disordered stretch occupies residues 318-379 (PNPGSRRLRP…ASGLPDKDSS (62 aa)). The span at 337–362 (PPEPSAAPRPQDSPPTPPLQPGPVGS) shows a compositional bias: pro residues. Residues 467–630 (RAREAALSRS…VELLPRGGLA (164 aa)) form the VPS9 domain.

In terms of tissue distribution, ubiquitous.

This is VPS9 domain-containing protein 1 (VPS9D1) from Homo sapiens (Human).